A 314-amino-acid polypeptide reads, in one-letter code: MIEIEKPNIETVEVSEDAKYGKFVVEPLERGYGTTLGNSLRRILLSSLPGAAVTSVQIDGVLHEFSTIEGVVEDVTTIILNLKKLALKIYSDEEKTLEIDVQGEGNVTAGDLTHDSDVEVLNPDLHIATLTKGASFRMRLQAKRGRGYVLAEGNKNDDQPIGVLPIDSIYTPVARVNYQVENTRVGQVTNYDKLTLDVWTDGSTRPEEAVSLGVKILTEHLNIFVGLTDQAQNAEIMVEKEEDQKEKVLEMTIEELDLSVRSYNCLKRAGINTVQELTHKTEEDMMKVRNLGRKSLEEVQEKLGELGLGLRNEE.

The tract at residues 1–228 is alpha N-terminal domain (alpha-NTD); it reads MIEIEKPNIE…EHLNIFVGLT (228 aa). An alpha C-terminal domain (alpha-CTD) region spans residues 245–314; sequence KEKVLEMTIE…ELGLGLRNEE (70 aa).

The protein belongs to the RNA polymerase alpha chain family. In terms of assembly, homodimer. The RNAP catalytic core consists of 2 alpha, 1 beta, 1 beta' and 1 omega subunit. When a sigma factor is associated with the core the holoenzyme is formed, which can initiate transcription.

It catalyses the reaction RNA(n) + a ribonucleoside 5'-triphosphate = RNA(n+1) + diphosphate. DNA-dependent RNA polymerase catalyzes the transcription of DNA into RNA using the four ribonucleoside triphosphates as substrates. The protein is DNA-directed RNA polymerase subunit alpha of Shouchella clausii (strain KSM-K16) (Alkalihalobacillus clausii).